The sequence spans 483 residues: Aspartyl/glutamyl-tRNA(Asn/Gln) amidotransferase subunit B (483 aa).

It belongs to the GatB/GatE family. GatB subfamily. In terms of assembly, heterotrimer of A, B and C subunits.

It catalyses the reaction L-glutamyl-tRNA(Gln) + L-glutamine + ATP + H2O = L-glutaminyl-tRNA(Gln) + L-glutamate + ADP + phosphate + H(+). The catalysed reaction is L-aspartyl-tRNA(Asn) + L-glutamine + ATP + H2O = L-asparaginyl-tRNA(Asn) + L-glutamate + ADP + phosphate + 2 H(+). Allows the formation of correctly charged Asn-tRNA(Asn) or Gln-tRNA(Gln) through the transamidation of misacylated Asp-tRNA(Asn) or Glu-tRNA(Gln) in organisms which lack either or both of asparaginyl-tRNA or glutaminyl-tRNA synthetases. The reaction takes place in the presence of glutamine and ATP through an activated phospho-Asp-tRNA(Asn) or phospho-Glu-tRNA(Gln). In Granulibacter bethesdensis (strain ATCC BAA-1260 / CGDNIH1), this protein is Aspartyl/glutamyl-tRNA(Asn/Gln) amidotransferase subunit B.